Consider the following 114-residue polypeptide: Probable 4-amino-4-deoxy-L-arabinose-phosphoundecaprenol flippase subunit ArnE (114 aa).

A run of 3 helical transmembrane segments spans residues 41-61, 64-84, and 91-111; these read MWLW…LLVL, MDVG…TLVG, and PVDP…FQLG.

The protein belongs to the ArnE family. Heterodimer of ArnE and ArnF.

It localises to the cell inner membrane. The protein operates within bacterial outer membrane biogenesis; lipopolysaccharide biosynthesis. Translocates 4-amino-4-deoxy-L-arabinose-phosphoundecaprenol (alpha-L-Ara4N-phosphoundecaprenol) from the cytoplasmic to the periplasmic side of the inner membrane. The chain is Probable 4-amino-4-deoxy-L-arabinose-phosphoundecaprenol flippase subunit ArnE from Pseudomonas savastanoi pv. phaseolicola (strain 1448A / Race 6) (Pseudomonas syringae pv. phaseolicola (strain 1448A / Race 6)).